Reading from the N-terminus, the 565-residue chain is Proline--tRNA ligase (565 aa).

This sequence belongs to the class-II aminoacyl-tRNA synthetase family. ProS type 1 subfamily. Homodimer.

The protein resides in the cytoplasm. It catalyses the reaction tRNA(Pro) + L-proline + ATP = L-prolyl-tRNA(Pro) + AMP + diphosphate. In terms of biological role, catalyzes the attachment of proline to tRNA(Pro) in a two-step reaction: proline is first activated by ATP to form Pro-AMP and then transferred to the acceptor end of tRNA(Pro). As ProRS can inadvertently accommodate and process non-cognate amino acids such as alanine and cysteine, to avoid such errors it has two additional distinct editing activities against alanine. One activity is designated as 'pretransfer' editing and involves the tRNA(Pro)-independent hydrolysis of activated Ala-AMP. The other activity is designated 'posttransfer' editing and involves deacylation of mischarged Ala-tRNA(Pro). The misacylated Cys-tRNA(Pro) is not edited by ProRS. The sequence is that of Proline--tRNA ligase from Lactobacillus helveticus (strain DPC 4571).